The primary structure comprises 172 residues: RNA silencing suppressor p19 (172 aa).

The segment covering 1–20 (MERAIQGNDAREQANSERWD) has biased composition (basic and acidic residues). The segment at 1-38 (MERAIQGNDAREQANSERWDGGSGGTTSPFKLPDESPS) is disordered.

The protein belongs to the tombusviruses protein p19 family. In terms of assembly, homodimer.

Functionally, acts as a suppressor of RNA-mediated gene silencing, also known as post-transcriptional gene silencing (PTGS), a mechanism of plant viral defense that limits the accumulation of viral RNAs. Binds to short interfering RNAs (siRNAs) with high affinity. Acts as a molecular caliper to specifically select siRNAs based on the length of the duplex region of the RNA. The chain is RNA silencing suppressor p19 from Capsicum annuum (Capsicum pepper).